The chain runs to 223 residues: MTEVLDLHGQDSDGGSEEMVLTPAELIEKLEQAWMNEKFAPELLESKAEIVECVMEQLEHMEENLRRAKKGDLKVSIHRMEMERIRYVLSSYLRCRLMKIEKFFPHILEKEKVRSEGEPSSLSPEEFVFAKEYMDHTETHFKNVALKHMPPNLQKVDLLRAVPKPDLDSYVFLRVKERQENILVEPEADEQRDYVIDLEVGSQHLIRYKTIAPLVASGAVQLI.

M1 carries the N-acetylmethionine modification. T2 is subject to N-acetylthreonine; in DNA replication complex GINS protein SLD5, N-terminally processed. Phosphoserine occurs at positions 12 and 16. The tract at residues 166–223 is important for GINS complex assembly; it reads DLDSYVFLRVKERQENILVEPEADEQRDYVIDLEVGSQHLIRYKTIAPLVASGAVQLI.

This sequence belongs to the GINS4/SLD5 family. In terms of assembly, component of the CMG helicase complex, a hexameric ring of related MCM2-7 subunits stabilized by CDC45 and the tetrameric GINS complex. Associated with ORC2. Interacts with HELB. In terms of tissue distribution, highly abundant in testis. Weakly expressed in thymus and bone marrow.

Its subcellular location is the nucleus. It localises to the chromosome. The protein localises to the cytoplasm. Its function is as follows. Required for initiation of chromosomal DNA replication. Core component of CDC45-MCM-GINS (CMG) helicase, the molecular machine that unwinds template DNA during replication, and around which the replisome is built. This chain is DNA replication complex GINS protein SLD5 (Gins4), found in Mus musculus (Mouse).